A 247-amino-acid polypeptide reads, in one-letter code: MSHRDTLFSAPIARLGDWTFDERVAEVFPDMIQRSVPGYSNIISMIGMLAERFVQPGTQVYDLGCSLGAATLSVRRNIHHDNCKIIAIDNSPAMIERCRRHIDAYKAPTPVDVIEGDIRDIAIENASMVVLNFTLQFLEPSERQALLDKIYQGLNPGGALVLSEKFSFEDAKVGELLFNMHHDFKRANGYSELEISQKRSMLENVMLTDSVETHKARLHQAGFEHSELWFQCFNFGSLVALKAEDAA.

S-adenosyl-L-methionine contacts are provided by residues Tyr-39, 64 to 66 (GCS), 89 to 90 (DN), 117 to 118 (DI), Asn-132, and Arg-199.

The protein belongs to the class I-like SAM-binding methyltransferase superfamily. Cx-SAM synthase family. Homodimer.

It catalyses the reaction prephenate + S-adenosyl-L-methionine = carboxy-S-adenosyl-L-methionine + 3-phenylpyruvate + H2O. Its function is as follows. Catalyzes the conversion of S-adenosyl-L-methionine (SAM) to carboxy-S-adenosyl-L-methionine (Cx-SAM). The sequence is that of Carboxy-S-adenosyl-L-methionine synthase from Escherichia fergusonii (strain ATCC 35469 / DSM 13698 / CCUG 18766 / IAM 14443 / JCM 21226 / LMG 7866 / NBRC 102419 / NCTC 12128 / CDC 0568-73).